The following is a 443-amino-acid chain: Chromosomal replication initiator protein DnaA (443 aa).

The segment at 1 to 75 (MNTQLNEIWQ…AIKQVTFKEY (75 aa)) is domain I, interacts with DnaA modulators. The tract at residues 75–105 (YEIAFIVPSQENLNKLTKQTESAGNEDSPLS) is domain II. Residues 106 to 321 (VLNPKYTFDT…GALNRVIAYS (216 aa)) form a domain III, AAA+ region region. ATP-binding residues include glycine 150, glycine 152, lysine 153, and threonine 154. A domain IV, binds dsDNA region spans residues 322-443 (SLTENEITVE…SEIKRNLLGK (122 aa)).

It belongs to the DnaA family. In terms of assembly, oligomerizes as a right-handed, spiral filament on DNA at oriC.

It localises to the cytoplasm. Functionally, plays an essential role in the initiation and regulation of chromosomal replication. ATP-DnaA binds to the origin of replication (oriC) to initiate formation of the DNA replication initiation complex once per cell cycle. Binds the DnaA box (a 9 base pair repeat at the origin) and separates the double-stranded (ds)DNA. Forms a right-handed helical filament on oriC DNA; dsDNA binds to the exterior of the filament while single-stranded (ss)DNA is stabiized in the filament's interior. The ATP-DnaA-oriC complex binds and stabilizes one strand of the AT-rich DNA unwinding element (DUE), permitting loading of DNA polymerase. After initiation quickly degrades to an ADP-DnaA complex that is not apt for DNA replication. Binds acidic phospholipids. The protein is Chromosomal replication initiator protein DnaA of Acetivibrio thermocellus (strain ATCC 27405 / DSM 1237 / JCM 9322 / NBRC 103400 / NCIMB 10682 / NRRL B-4536 / VPI 7372) (Clostridium thermocellum).